The chain runs to 174 residues: MDYFTLFGLPARYLIDGNQLTTRYQELQRQFHPDRFATQPERERLASMQQAATINDAYQTLKHPLKRAEYMLSLQGFDLGNEQHTMRDTAFLMEQLELREELDAIERKPDAETLLAEFSRRVAQMTTTRTQQMVEQLDAQLWVQAADTVRKLRFLDKLQQQVEQLEERLFDDFA.

A J domain is found at 2-74; sequence DYFTLFGLPA…LKRAEYMLSL (73 aa).

It belongs to the HscB family. Interacts with HscA and stimulates its ATPase activity. Interacts with IscU.

Functionally, co-chaperone involved in the maturation of iron-sulfur cluster-containing proteins. Seems to help targeting proteins to be folded toward HscA. This Yersinia pestis bv. Antiqua (strain Antiqua) protein is Co-chaperone protein HscB.